Here is a 527-residue protein sequence, read N- to C-terminus: Glutamate--cysteine ligase (527 aa).

The protein belongs to the glutamate--cysteine ligase type 1 family. Type 1 subfamily.

It carries out the reaction L-cysteine + L-glutamate + ATP = gamma-L-glutamyl-L-cysteine + ADP + phosphate + H(+). It participates in sulfur metabolism; glutathione biosynthesis; glutathione from L-cysteine and L-glutamate: step 1/2. This is Glutamate--cysteine ligase from Pseudomonas paraeruginosa (strain DSM 24068 / PA7) (Pseudomonas aeruginosa (strain PA7)).